The chain runs to 351 residues: Chorismate synthase (351 aa).

Residues 39–60 (EDIQRDLERRRPGKRLTSPRGE) are disordered. NADP(+) contacts are provided by Arg-48 and Arg-53. Residues 124–126 (RSS), Ala-276, 291–295 (KPIPS), and Arg-317 each bind FMN.

This sequence belongs to the chorismate synthase family. As to quaternary structure, homotetramer. Requires FMNH2 as cofactor.

The catalysed reaction is 5-O-(1-carboxyvinyl)-3-phosphoshikimate = chorismate + phosphate. Its pathway is metabolic intermediate biosynthesis; chorismate biosynthesis; chorismate from D-erythrose 4-phosphate and phosphoenolpyruvate: step 7/7. Its function is as follows. Catalyzes the anti-1,4-elimination of the C-3 phosphate and the C-6 proR hydrogen from 5-enolpyruvylshikimate-3-phosphate (EPSP) to yield chorismate, which is the branch point compound that serves as the starting substrate for the three terminal pathways of aromatic amino acid biosynthesis. This reaction introduces a second double bond into the aromatic ring system. The chain is Chorismate synthase from Syntrophobacter fumaroxidans (strain DSM 10017 / MPOB).